The following is a 477-amino-acid chain: Ribulose bisphosphate carboxylase large chain (477 aa).

Residues 1-2 constitute a propeptide that is removed on maturation; that stretch reads MS. At P3 the chain carries N-acetylproline. The residue at position 14 (K14) is an N6,N6,N6-trimethyllysine. Residues N123 and T173 each contribute to the substrate site. K175 (proton acceptor) is an active-site residue. A substrate-binding site is contributed by K177. K201, D203, and E204 together coordinate Mg(2+). K201 is subject to N6-carboxylysine. H294 functions as the Proton acceptor in the catalytic mechanism. Substrate contacts are provided by R295, H327, and S379.

The protein belongs to the RuBisCO large chain family. Type I subfamily. As to quaternary structure, heterohexadecamer of 8 large chains and 8 small chains; disulfide-linked. The disulfide link is formed within the large subunit homodimers. Requires Mg(2+) as cofactor. In terms of processing, the disulfide bond which can form in the large chain dimeric partners within the hexadecamer appears to be associated with oxidative stress and protein turnover.

The protein localises to the plastid. It is found in the chloroplast. It catalyses the reaction 2 (2R)-3-phosphoglycerate + 2 H(+) = D-ribulose 1,5-bisphosphate + CO2 + H2O. It carries out the reaction D-ribulose 1,5-bisphosphate + O2 = 2-phosphoglycolate + (2R)-3-phosphoglycerate + 2 H(+). Its function is as follows. RuBisCO catalyzes two reactions: the carboxylation of D-ribulose 1,5-bisphosphate, the primary event in carbon dioxide fixation, as well as the oxidative fragmentation of the pentose substrate in the photorespiration process. Both reactions occur simultaneously and in competition at the same active site. The sequence is that of Ribulose bisphosphate carboxylase large chain from Digitalis purpurea (Common foxglove).